Here is a 360-residue protein sequence, read N- to C-terminus: Peptide chain release factor 1 (360 aa).

Residue Gln-237 is modified to N5-methylglutamine.

Belongs to the prokaryotic/mitochondrial release factor family. Methylated by PrmC. Methylation increases the termination efficiency of RF1.

It is found in the cytoplasm. Functionally, peptide chain release factor 1 directs the termination of translation in response to the peptide chain termination codons UAG and UAA. In Pseudomonas putida (strain GB-1), this protein is Peptide chain release factor 1.